Here is a 462-residue protein sequence, read N- to C-terminus: ATP synthase subunit beta (462 aa).

151–158 (GGAGVGKT) is a binding site for ATP.

It belongs to the ATPase alpha/beta chains family. As to quaternary structure, F-type ATPases have 2 components, CF(1) - the catalytic core - and CF(0) - the membrane proton channel. CF(1) has five subunits: alpha(3), beta(3), gamma(1), delta(1), epsilon(1). CF(0) has four main subunits: a(1), b(1), b'(1) and c(9-12).

The protein resides in the cell inner membrane. It carries out the reaction ATP + H2O + 4 H(+)(in) = ADP + phosphate + 5 H(+)(out). In terms of biological role, produces ATP from ADP in the presence of a proton gradient across the membrane. The catalytic sites are hosted primarily by the beta subunits. The chain is ATP synthase subunit beta from Chlorobium phaeovibrioides (strain DSM 265 / 1930) (Prosthecochloris vibrioformis (strain DSM 265)).